A 319-amino-acid polypeptide reads, in one-letter code: MAAKGGTVKAASGFNAAEDAQTLRKAMKGLGTDEDAIISVLAYRSTAQRQEIRTAYKSTIGRDLLDDLKSELSGNFEQVILGMMTPTVLYDVQELRRAMKGAGTDEGCLIEILASRTPEEIRRINQTYQLQYGRSLEDDIRSDTSFMFQRVLVSLSAGGRDEGNYLDDALVRQDAQDLYEAGEKKWGTDEVKFLTVLCSRNRNHLLHVFDEYKRISQKDIEQSIKSETSGSFEDALLAIVKCMRNKSAYFAERLYKSMKGLGTDDNTLIRVMVSRAEIDMMDIRANFKRLYGKSLYSFIKGDTSGDYRKVLLILCGGDD.

N-acetylalanine is present on A2. T7 carries the post-translational modification Phosphothreonine; by PKC. S12 is modified (phosphoserine). Annexin repeat units follow at residues 14–85 (FNAA…GMMT), 86–157 (PTVL…SLSA), 169–241 (ALVR…AIVK), and 245–316 (NKSA…ILCG). N6-acetyllysine occurs at positions 213, 293, and 300.

It belongs to the annexin family. Monomer.

The protein resides in the zymogen granule membrane. Calcium/phospholipid-binding protein which promotes membrane fusion and is involved in exocytosis. In Sus scrofa (Pig), this protein is Annexin A4 (ANXA4).